The chain runs to 507 residues: Nuclear distribution protein PAC1 (507 aa).

Residues 72-98 adopt a coiled-coil conformation; that stretch reads STVLRLQRKIMDLTDEVSNLKTIIEAK. WD repeat units lie at residues 125–164, 170–222, 225–265, 268–312, 315–389, 410–449, and 474–507; these read QTHQ…PSIP, AHSR…QIRI, GHDH…CTRT, GHSD…GLCL, GHSH…VRPN, GHQS…TGGR, and PKDT…RLWS.

The protein belongs to the WD repeat LIS1/nudF family. Self-associates. Interacts with NDL1 and dynein.

It localises to the cytoplasm. Its subcellular location is the cytoskeleton. The protein resides in the spindle pole. In terms of biological role, positively regulates the activity of the minus-end directed microtubule motor protein dynein. Plays a central role in positioning the mitotic spindle at the bud neck during cell division. Targets cytoplasmic dynein to microtubule plus ends, thereby promoting dynein-mediated microtubule sliding along the bud cortex and consequently the movement of the mitotic spindle to the bud neck. This is Nuclear distribution protein PAC1 from Meyerozyma guilliermondii (strain ATCC 6260 / CBS 566 / DSM 6381 / JCM 1539 / NBRC 10279 / NRRL Y-324) (Yeast).